A 121-amino-acid polypeptide reads, in one-letter code: MMAPQTTRNDPRQRGQEAEERARAYLEGQGLQTLARNFRTRRGEIDLIMADGGVTVFVEVRRRSHPGYGGATASVDRRKRQRLSRAASAWLARHPGWARFDVVATDGHEVHWVRDAFREES.

The tract at residues 1–20 (MMAPQTTRNDPRQRGQEAEE) is disordered. The span at 9–20 (NDPRQRGQEAEE) shows a compositional bias: basic and acidic residues.

It belongs to the UPF0102 family.

This chain is UPF0102 protein Hhal_2103, found in Halorhodospira halophila (strain DSM 244 / SL1) (Ectothiorhodospira halophila (strain DSM 244 / SL1)).